Here is a 2776-residue protein sequence, read N- to C-terminus: MDGVAEFSEYVSETVDVPSPFDLLEPPTSGGFLKLSKPCCYIFPGGRGDSALFAVNGFNILVDGGSDRKSCFWKLVRHLDRIDSVLLTHIGADNLPGINGLLQRKVAELEEEQSQGSSSYSDWVKNLISPELGVVFFNVPDKLRLPDASRKAKRSIEEACLTLQHLNRLGIQAEPLYRVVSNTIEPLTLFHKMGVGRLDMYVLNPVKDSKEMQFLMQKWAGNSKAKTGIVLANGKEAEISVPYLTSITALVVWLPANPTEKIVRVLFPGNAPQNKILEGLEKLRHLDFLRYPVATQKDLAAGAVPANLKPSKIKHRADSKESLKAAPKTAMSKLAKREEVLEEGAKEARSELAKELAKSEKKAKEPSEKPPEKPSKPERVRTESSEALKAEKRKLIKDKVGKKHLKEKISKLEEKRDKEKKEIKKERKELKKEEGRKEEKKDAKKDEKRKDTKPELKKFSKPDLKPFTPEVRKTLYKAKAPGRLKVDKGRAARGEKELSSEPRTPPAQKGAAPPPAASGHRELALSSPEDLTQDFEELKREERGLLAEPRDTELGEKPLPADASEQGRPSTAIQVTQPPASVLEQEQVEREKEVVPDFPEDKGSKNRAPDSGAEVEREKETWEERKPREAELTPENIAAAREESEPEVKEDVIEKAELEEMEEVHPSDEEEEETKAESFYQKHMQEALKVIPKGREALGGRELGFQGKAPEKETASFLSSLATPAGAAEHVSYIQDETIPGYSETEQTISDEEIHDEPDERPAPPRFPTSTYDLSGPEGPGPFEASQSAESAVPASSSKTYGAPETELTYPPNMVAAPLAEEEHVSSATSITECDKLSSFATSVAEDQSVASLTAPQTEETGKSSLLLDTVTSIPSSRTEATQGLDYVPSAGTISPTSSLEEDKGFKSPPCEDFSVTGESEKKGESVGRGLTGEKAVGKEEKNVTTSEKLSSQYAAVFGAPGHALHPGEPALGEVEERCLSPDDSTVKMASPPPSGPPSAAHTPFHQSPVEEKSEPQDFQEDSWGDTKHAPGVSKEDAEEQTVKPGPEEAMSEEGKVPLSRSPQAQDTLGSLAGGQTGCTIQLLPEQDKAVVFETGEAGAASGAGSLPGEVRTQEPAEPQKDELLGFTDQSFSPEDAESLSVLSVVSPDTAKQEATPRSPCTPKEQQLHKDLWPMVSPEDTQSLSFSEESPSKETSLDISSKQLSPESLGTLQFGELSLGKEEKGPLVKAEDNSCHLAPVSIPEPHTATVSPPTDEAAGEAGLTDESPAGNLPGSSFSHSALSGDRKHSPGEITGPGGHFMTSDSSLTKSPESLSSPAMEDLAMEWGGKAPGSEDRATEQKEKELERKSETLQQKDQILSEKAALVQRDSVMHQKDEALDEENKPGGQQDKTSEQKGRDLDKKDTAVELGKGPEPKGKDLYLEDQGLAEKDKALEQRGAALQQTQAPEPRARAQEHRDLEQKDEHLELRDKTPEEKDKVLVLEDRAPEHIIPQPTQTDRAPEHRSKVDKEQKDEASEEKEQVLEQKDWAREKEGAALDQDNRAAGQKDGTLKEDKTQGQKSSFLEDKSTTPKEMTLDQKSPEKAKGVEQQDGAVPEKTRALGLEESPEEEGKAREQEEKYWKEQDVVQGWRETSPTRGEPVPAWEGKSPEQEVRYWRDRDITLQQDAYWKELSCERKVWFPHELDGQGARPRYSEERESTFLDEGPNEQEITPLQHTPRSPWASDFKDFQEPLPQKGLEVERWLAESPVGLPPEEEDKLTRSPFEIISPPASPPEMTGQRVPSAPGQESPVPDTKSTPPTRNEPTTPSWLAEIPPWVPKDRPLPPAPLSPAPAPPTPAPDPHAPAPFSWGIAEYDSVVAAVQEGAAELEGGPYSPLGKDYRKAEGEREGEGGAGAPDSSSFSSKVPEVTESHTTRDAEQTEPEQREPTPYPDERSFQYADIYEQMMLTGLGPACPTREPPLGASGDWPPHLSTKEEAAGRNKSAEKELSSAVSPPNLHSDTPTFSYASLAGPTIPPRQEPEPGPNVEPSFTPPAVPPRAPISLSQDPSPPLNGSTTSCGPDRRTPSPKEAGRSHWDDGTNDSDLEKGAREQPEKETQSPSPHHPMPVGHPSLWPETEAHSSLSSDSHLGPVRPSLDFPASAFGFSSLQPAPPQLPSPAEPRSAPCGSLAFSGDRALALVPGTPTRTRHDEYLEVTKAPSLDSSLPQLPSPSSPGAPLLSNLPRPASPALSEGSSSEATTPVISSVAERFPPGLEVAEQSSGELGPGNEPAAHSLWDLTPLSPAPLASRDLAPAPAPAPAPSLPGNLGDGTLSCRPECSGELTKKPSPFLSHSGDHEANGPGETSLNPPGFATATAEKEEAEALHAWERGSWPEGAERSSRPDTLLSSEQRPGKSSGGPPCSLSSEVEAGPQGCATDPRPHCGELSPSFLNPPLPPSTDDSDLSTEEARLAGKGGRRRAGRPGATGGPCPMADETPPTSASDSGSSQSDSDVPPETEECPSITAEAALDSDEDGDFLPVDKAGGVSGTHHPRPGHDPPPAPLPDPRPPPPRPDVCMADPEGLSSESGRVERLREKVQGRPGRKAPGRAKPASPARRLDIRGKRSPTPGKGPVDRTSRALPRPRSTPSQVTSEEKDGHSPMSKGLVNGLKAGSTALGSKGSSGPPVYVDLAYIPNHCSGKTADQDFFRRVRASYYVVSGNDPANGEPSRAVLDALLEGKAQWGENLQVTLIPTHDTEVTREWYQQTHEQQQQLNVLVLASSSTVVMQDESFPACKIEF.

Residues Ser-114, Ser-117, Ser-118, Ser-121, and Ser-155 each carry the phosphoserine modification. Tyr-177 carries the phosphotyrosine modification. The segment at 310–331 (PSKIKHRADSKESLKAAPKTAM) is disordered. Phosphoserine is present on residues Ser-319 and Ser-322. Repeat 1 spans residues 336–338 (KRE). The segment at 336–541 (KREEVLEEGA…TQDFEELKRE (206 aa)) is 11 X 3 AA approximate repeats of K-K-[DE]. Basic and acidic residues predominate over residues 345–390 (AKEARSELAKELAKSEKKAKEPSEKPPEKPSKPERVRTESSEALKA). Disordered regions lie at residues 345–678 (AKEA…KAES), 738–809 (TIPG…TELT), 846–1076 (EDQS…AGGQ), 1094–1210 (ETGE…ESLG), 1223–1651 (EKGP…SPEQ), 1685–1729 (DGQG…FKDF), 1744–1848 (LAES…APFS), and 1866–2648 (AELE…NGLK). Ser-384 bears the Phosphoserine mark. The segment covering 391–406 (EKRKLIKDKVGKKHLK) has biased composition (basic residues). Composition is skewed to basic and acidic residues over residues 407-464 (EKIS…KPDL) and 484-500 (LKVDKGRAARGEKELSS). A run of 9 repeats spans residues 415–417 (KRD), 420–422 (KKE), 424–426 (KKE), 427–429 (RKE), 431–433 (KKE), 436–438 (RKE), 440–442 (KKD), 444–446 (KKD), and 449–451 (RKD). Position 504 is a phosphothreonine (Thr-504). 2 positions are modified to phosphoserine: Ser-526 and Ser-527. Basic and acidic residues predominate over residues 536–556 (EELKREERGLLAEPRDTELGE). Repeat unit 11 spans residues 539–541 (KRE). A compositionally biased stretch (polar residues) spans 567-579 (GRPSTAIQVTQPP). Residues 587-631 (QVEREKEVVPDFPEDKGSKNRAPDSGAEVEREKETWEERKPREAE) are compositionally biased toward basic and acidic residues. Phosphoserine occurs at positions 604 and 611. Thr-633 carries the post-translational modification Phosphothreonine. Residues 640–667 (AREESEPEVKEDVIEKAELEEMEEVHPS) show a composition bias toward basic and acidic residues. 4 positions are modified to phosphoserine: Ser-644, Ser-667, Ser-678, and Ser-786. 3 stretches are compositionally biased toward polar residues: residues 785–800 (ASQSAESAVPASSSKT), 846–859 (EDQSVASLTAPQTE), and 870–882 (TVTSIPSSRTEAT). Residues Ser-873, Ser-876, Ser-877, and Ser-890 each carry the phosphoserine modification. The residue at position 893 (Thr-893) is a Phosphothreonine. 3 positions are modified to phosphoserine: Ser-895, Ser-899, and Ser-908. Residues 944 to 954 (VTTSEKLSSQY) show a composition bias toward polar residues. Phosphoserine occurs at positions 981, 991, 999, 1008, 1014, 1023, and 1062. Thr-1068 is modified (phosphothreonine). The segment covering 1096-1105 (GEAGAASGAG) has biased composition (low complexity). Basic and acidic residues predominate over residues 1112–1124 (RTQEPAEPQKDEL). Residues Ser-1131, Ser-1133, Ser-1147, Ser-1159, Ser-1177, Ser-1187, Ser-1190, Ser-1196, Ser-1205, and Ser-1208 each carry the phosphoserine modification. Residues 1179-1189 (EDTQSLSFSEE) show a composition bias toward polar residues. The span at 1197-1210 (LDISSKQLSPESLG) shows a compositional bias: polar residues. Residues 1223 to 1234 (EKGPLVKAEDNS) are compositionally biased toward basic and acidic residues. Residues Ser-1251, Ser-1289, Ser-1310, Ser-1313, and Ser-1316 each carry the phosphoserine modification. Residues 1302–1317 (TSDSSLTKSPESLSSP) are compositionally biased toward low complexity. Composition is skewed to basic and acidic residues over residues 1332-1350 (GSEDRATEQKEKELERKSE), 1370-1384 (SVMHQKDEALDEENK), 1391-1435 (KTSE…KALE), 1449-1488 (PRARAQEHRDLEQKDEHLELRDKTPEEKDKVLVLEDRAPE), 1499-1541 (RAPE…DQDN), and 1549-1599 (GTLK…EKTR). Phosphoserine is present on residues Ser-1516, Ser-1580, and Ser-1606. Basic and acidic residues predominate over residues 1609–1625 (EEGKAREQEEKYWKEQD). 2 positions are modified to phosphoserine: Ser-1634 and Ser-1648. The span at 1709–1718 (QEITPLQHTP) shows a compositional bias: polar residues. Residues Ser-1720, Ser-1747, Ser-1762, Ser-1768, and Ser-1772 each carry the phosphoserine modification. A Phosphothreonine modification is found at Thr-1777. A phosphoserine mark is found at Ser-1783 and Ser-1789. Over residues 1794–1808 (TKSTPPTRNEPTTPS) the composition is skewed to polar residues. The segment covering 1823–1844 (LPPAPLSPAPAPPTPAPDPHAP) has biased composition (pro residues). Residues 1878–1890 (KDYRKAEGEREGE) are compositionally biased toward basic and acidic residues. Phosphoserine is present on Ser-1902. Composition is skewed to basic and acidic residues over residues 1907 to 1935 (EVTESHTTRDAEQTEPEQREPTPYPDERS) and 1972 to 1988 (STKEEAAGRNKSAEKEL). Position 1928 is a phosphothreonine (Thr-1928). Residues 1990–2006 (SAVSPPNLHSDTPTFSY) show a composition bias toward polar residues. At Ser-1993 the chain carries Phosphoserine. The segment covering 2013 to 2039 (TIPPRQEPEPGPNVEPSFTPPAVPPRA) has biased composition (pro residues). Thr-2031 is subject to Phosphothreonine. Polar residues predominate over residues 2042–2058 (SLSQDPSPPLNGSTTSC). 2 positions are modified to phosphoserine: Ser-2048 and Ser-2082. Residues 2060–2096 (PDRRTPSPKEAGRSHWDDGTNDSDLEKGAREQPEKET) are compositionally biased toward basic and acidic residues. A compositionally biased stretch (pro residues) spans 2149–2158 (PAPPQLPSPA). Phosphoserine occurs at positions 2209, 2226, 2230, 2233, and 2234. Residues 2231 to 2242 (EGSSSEATTPVI) show a composition bias toward polar residues. A compositionally biased stretch (low complexity) spans 2279 to 2292 (PLSPAPLASRDLAP). Over residues 2355–2367 (AEKEEAEALHAWE) the composition is skewed to basic and acidic residues. Ser-2425 bears the Phosphoserine mark. Low complexity predominate over residues 2478 to 2490 (SASDSGSSQSDSD). Residues 2535–2551 (DPPPAPLPDPRPPPPRP) show a composition bias toward pro residues. Residues 2566–2576 (GRVERLREKVQ) are compositionally biased toward basic and acidic residues. 2 positions are modified to phosphoserine: Ser-2623 and Ser-2637.

This sequence belongs to the MAP1 family. 3 different light chains, LC1 (a cleavage product of MAP1B), LC2 (a cleavage product of MAP1A) and LC3 (produced by one of the MAP1LC3 genes), can associate with the MAP1A or MAP1B heavy chains. Interacts with guanylate kinase-like domain of DLG1, DLG2 and DLG4. Binds to CSNK1D. Interacts with TIAM2. In terms of assembly, interacts with ELAVL4. Phosphorylated by CSNK1D. In terms of processing, LC2 is generated from MAP1A by proteolytic processing. It is free to associate with both MAP1A and MAP1B. Both isoforms highly expressed in brain, and to a lesser extent in embryo. Isoform 1 is also expressed at a low level in other tissues including heart and muscle.

Its subcellular location is the cytoplasm. It localises to the cytoskeleton. Its function is as follows. Structural protein involved in the filamentous cross-bridging between microtubules and other skeletal elements. This chain is Microtubule-associated protein 1A (Map1a), found in Mus musculus (Mouse).